The primary structure comprises 1187 residues: Myelin transcription factor 1-like protein (1187 aa).

Residues 1–22 form a disordered region; that stretch reads MDVDSEEKRHRTRSKGVRVPVE. A CCHHC-type 1 zinc finger spans residues 22-65; sequence EPAIQELFSCPTPGCDGSGHVSGKYARHRSVYGCPLAKKRKTQD. C31, C36, H49, and C55 together coordinate Zn(2+). Disordered regions lie at residues 56 to 178 and 221 to 248; these read PLAK…QMSC and RTES…GRKS. Residues 89–172 are compositionally biased toward acidic residues; sequence ECYESDGTED…EEEEEEEENE (84 aa). S251 carries the post-translational modification Phosphoserine. Disordered stretches follow at residues 343–422 and 450–514; these read SETN…DRSE and REKM…GCDG. Residues 344 to 358 are compositionally biased toward polar residues; that stretch reads ETNPQDRSQPPNMSV. 4 stretches are compositionally biased toward basic and acidic residues: residues 362–377, 401–412, 450–488, and 496–506; these read VRQE…DRSY, AKEDGCHERDDD, REKM…DSHV, and DPSRTEKRESK. CCHHC-type zinc fingers lie at residues 498-541 and 542-585; these read SRTE…PPEI and LAMH…KLAK. C507, C512, H525, C531, C551, C556, H569, and C575 together coordinate Zn(2+). The disordered stretch occupies residues 686 to 710; that stretch reads ASPSSSTTSSYAPSSSSNLSCGGGS. 3 CCHHC-type zinc fingers span residues 897 to 940, 946 to 989, and 999 to 1042; these read LATS…GIRI, DKED…QKDG, and KSVK…MKKA. Positions 906, 911, 924, 930, 955, 960, 973, 979, 1008, 1013, 1026, and 1032 each coordinate Zn(2+). Residues 1058-1132 are a coiled coil; sequence NGIENDEEIK…ANLSQSLIHS (75 aa).

Belongs to the MYT1 family. In terms of assembly, interacts with SIN3B. As to expression, brain.

It is found in the nucleus. The protein resides in the chromosome. Its function is as follows. Transcription factor that plays a key role in neuronal differentiation by specifically repressing expression of non-neuronal genes during neuron differentiation. In contrast to other transcription repressors that inhibit specific lineages, mediates repression of multiple differentiation programs. Also represses expression of negative regulators of neurogenesis, such as members of the Notch signaling pathway, including HES1. The combination of three transcription factors, ASCL1, POU3F2/BRN2 and MYT1L, is sufficient to reprogram fibroblasts and other somatic cells into induced neuronal (iN) cells in vitro. Directly binds the 5'-AAGTT-3' core motif present on the promoter of target genes and represses transcription by recruiting a multiprotein complex containing SIN3B. The 5'-AAGTT-3' core motif is absent from the promoter of neural genes. The protein is Myelin transcription factor 1-like protein of Mus musculus (Mouse).